The chain runs to 243 residues: Pyridoxine 5'-phosphate synthase (243 aa).

N9 lines the 3-amino-2-oxopropyl phosphate pocket. 11-12 (DH) serves as a coordination point for 1-deoxy-D-xylulose 5-phosphate. Position 20 (R20) interacts with 3-amino-2-oxopropyl phosphate. H45 acts as the Proton acceptor in catalysis. Residues R47 and H52 each contribute to the 1-deoxy-D-xylulose 5-phosphate site. E72 serves as the catalytic Proton acceptor. T102 provides a ligand contact to 1-deoxy-D-xylulose 5-phosphate. Catalysis depends on H193, which acts as the Proton donor. 3-amino-2-oxopropyl phosphate-binding positions include G194 and 215 to 216 (GH).

The protein belongs to the PNP synthase family. As to quaternary structure, homooctamer; tetramer of dimers.

The protein resides in the cytoplasm. It catalyses the reaction 3-amino-2-oxopropyl phosphate + 1-deoxy-D-xylulose 5-phosphate = pyridoxine 5'-phosphate + phosphate + 2 H2O + H(+). It functions in the pathway cofactor biosynthesis; pyridoxine 5'-phosphate biosynthesis; pyridoxine 5'-phosphate from D-erythrose 4-phosphate: step 5/5. Functionally, catalyzes the complicated ring closure reaction between the two acyclic compounds 1-deoxy-D-xylulose-5-phosphate (DXP) and 3-amino-2-oxopropyl phosphate (1-amino-acetone-3-phosphate or AAP) to form pyridoxine 5'-phosphate (PNP) and inorganic phosphate. The protein is Pyridoxine 5'-phosphate synthase of Salmonella typhimurium (strain LT2 / SGSC1412 / ATCC 700720).